The following is a 597-amino-acid chain: UvrABC system protein C (597 aa).

One can recognise a GIY-YIG domain in the interval 14 to 91; the sequence is KKPGCYLWKD…INQYQPRFNL (78 aa).

Belongs to the UvrC family. As to quaternary structure, interacts with UvrB in an incision complex.

The protein localises to the cytoplasm. Functionally, the UvrABC repair system catalyzes the recognition and processing of DNA lesions. UvrC both incises the 5' and 3' sides of the lesion. The N-terminal half is responsible for the 3' incision and the C-terminal half is responsible for the 5' incision. The protein is UvrABC system protein C of Mycoplasma genitalium (strain ATCC 33530 / DSM 19775 / NCTC 10195 / G37) (Mycoplasmoides genitalium).